Consider the following 532-residue polypeptide: Neutral amino acid transporter A (532 aa).

Met-1 is modified (N-acetylmethionine). Positions 1–10 (MEKSNETNGY) are enriched in polar residues. Positions 1–25 (MEKSNETNGYLDSAQAGPAAGPGAP) are disordered. The Cytoplasmic portion of the chain corresponds to 1–41 (MEKSNETNGYLDSAQAGPAAGPGAPGTAAGRARRCAGFLRR). Over residues 14–25 (AQAGPAAGPGAP) the composition is skewed to low complexity. 3 helical membrane passes run 42–62 (QALV…GAAL), 88–108 (MIIL…LDAS), and 119–139 (AYFG…AFII). At 140–216 (KPGSGAQTLQ…VTHEKIPIGT (77 aa)) the chain is on the extracellular side. Asn-201 and Asn-206 each carry an N-linked (GlcNAc...) asparagine glycan. Transmembrane regions (helical) follow at residues 217–237 (EIEG…GVAL), 257–277 (ATMV…MFLV), 298–318 (IFAS…LIYF), 328–348 (FLLG…SSAT), 373–393 (IGAT…AVFI), and 418–438 (VGAA…LEAI). Residues 500 to 532 (CKSEEETSPLVTHQNPAGPVASAPELESKESVL) are disordered. A phosphoserine mark is found at Ser-507, Ser-527, and Ser-530.

It belongs to the dicarboxylate/amino acid:cation symporter (DAACS) (TC 2.A.23) family. SLC1A4 subfamily. As to expression, expressed mostly in brain, muscle, and pancreas but detected in all tissues examined.

The protein resides in the membrane. The protein localises to the melanosome. It carries out the reaction L-threonine(in) + Na(+)(in) = L-threonine(out) + Na(+)(out). The catalysed reaction is L-serine(in) + Na(+)(in) = L-serine(out) + Na(+)(out). It catalyses the reaction L-cysteine(in) + Na(+)(in) = L-cysteine(out) + Na(+)(out). The enzyme catalyses L-alanine(in) + Na(+)(in) = L-alanine(out) + Na(+)(out). It carries out the reaction L-proline(in) + Na(+)(in) = L-proline(out) + Na(+)(out). The catalysed reaction is 4-hydroxy-L-proline(in) + Na(+)(in) = 4-hydroxy-L-proline(out) + Na(+)(out). In terms of biological role, sodium-dependent neutral amino-acid transporter that mediates transport of alanine, serine, cysteine, proline, hydroxyproline and threonine. The chain is Neutral amino acid transporter A from Homo sapiens (Human).